The primary structure comprises 407 residues: Actinorhodin polyketide putative beta-ketoacyl synthase 2 (407 aa).

Residues 1–402 (MSVLITGVGV…GFNSAAVLRR (402 aa)) enclose the Ketosynthase family 3 (KS3) domain.

It belongs to the thiolase-like superfamily. Beta-ketoacyl-ACP synthases family.

This chain is Actinorhodin polyketide putative beta-ketoacyl synthase 2, found in Streptomyces coelicolor (strain ATCC BAA-471 / A3(2) / M145).